The primary structure comprises 304 residues: Polyisoprenyl-teichoic acid--peptidoglycan teichoic acid transferase TagU (304 aa).

Over 1–4 (MKKK) the chain is Cytoplasmic. A helical; Signal-anchor for type II membrane protein membrane pass occupies residues 5-25 (ILFWILGIIGIMIIGGGVYAY). Residues 26–304 (NVYSSVSKTL…KLRAHLELTK (279 aa)) are Extracellular-facing.

It belongs to the LytR/CpsA/Psr (LCP) family.

It is found in the cell membrane. Its pathway is cell wall biogenesis. In terms of biological role, may catalyze the final step in cell wall teichoic acid biosynthesis, the transfer of the anionic cell wall polymers (APs) from their lipid-linked precursor to the cell wall peptidoglycan (PG). This chain is Polyisoprenyl-teichoic acid--peptidoglycan teichoic acid transferase TagU, found in Bacillus mycoides (strain KBAB4) (Bacillus weihenstephanensis).